A 222-amino-acid polypeptide reads, in one-letter code: NADH dehydrogenase [ubiquinone] iron-sulfur protein 8-A, mitochondrial (222 aa).

4Fe-4S ferredoxin-type domains lie at 114–143 (RRYP…IEAE) and 153–182 (TRYD…EGPN). Residues cysteine 123, cysteine 126, cysteine 129, cysteine 133, cysteine 162, cysteine 165, cysteine 168, and cysteine 172 each coordinate [4Fe-4S] cluster.

It belongs to the complex I 23 kDa subunit family. In terms of assembly, complex I is composed of at least 49 different subunits. This is a component of the iron-sulfur (IP) fragment of the enzyme. The cofactor is [4Fe-4S] cluster.

The protein localises to the mitochondrion. The catalysed reaction is a ubiquinone + NADH + 5 H(+)(in) = a ubiquinol + NAD(+) + 4 H(+)(out). Core subunit of the mitochondrial membrane respiratory chain NADH dehydrogenase (Complex I) that is believed to belong to the minimal assembly required for catalysis. Complex I functions in the transfer of electrons from NADH to the respiratory chain. The immediate electron acceptor for the enzyme is believed to be ubiquinone. May donate electrons to ubiquinone. In Arabidopsis thaliana (Mouse-ear cress), this protein is NADH dehydrogenase [ubiquinone] iron-sulfur protein 8-A, mitochondrial.